Reading from the N-terminus, the 597-residue chain is Elongation factor 4 (597 aa).

The region spanning 2-184 (DHIRNFSIIA…SLIAKVPPPK (183 aa)) is the tr-type G domain. GTP-binding positions include 14–19 (DHGKST) and 131–134 (NKID).

Belongs to the TRAFAC class translation factor GTPase superfamily. Classic translation factor GTPase family. LepA subfamily.

It localises to the cell inner membrane. The catalysed reaction is GTP + H2O = GDP + phosphate + H(+). Required for accurate and efficient protein synthesis under certain stress conditions. May act as a fidelity factor of the translation reaction, by catalyzing a one-codon backward translocation of tRNAs on improperly translocated ribosomes. Back-translocation proceeds from a post-translocation (POST) complex to a pre-translocation (PRE) complex, thus giving elongation factor G a second chance to translocate the tRNAs correctly. Binds to ribosomes in a GTP-dependent manner. This chain is Elongation factor 4, found in Burkholderia cenocepacia (strain HI2424).